Here is a 485-residue protein sequence, read N- to C-terminus: Katanin p60 ATPase-containing subunit A1 (485 aa).

Residues 101–173 are disordered; sequence HRSSPCVVRK…KNKAEAVETE (73 aa). Basic and acidic residues predominate over residues 141-173; it reads NGDKGKPQKSKEKKENPSKPKEDKNKAEAVETE. Residue 244-251 participates in ATP binding; that stretch reads GPPGTGKT.

Belongs to the AAA ATPase family. Katanin p60 subunit A1 subfamily. In terms of assembly, can homooligomerize into hexameric rings, which may be promoted by interaction with microtubules. Interacts with katnb1, which may serve as a targeting subunit.

It localises to the cytoplasm. The protein resides in the cytoskeleton. It is found in the microtubule organizing center. Its subcellular location is the centrosome. The protein localises to the spindle pole. It localises to the spindle. It carries out the reaction n ATP + n H2O + a microtubule = n ADP + n phosphate + (n+1) alpha/beta tubulin heterodimers.. With respect to regulation, ATPase activity is stimulated by microtubules, which promote homooligomerization. ATP-dependent microtubule severing is stimulated by interaction with katnb1. In terms of biological role, catalytic subunit of a complex which severs microtubules in an ATP-dependent manner. Microtubule severing may promote rapid reorganization of cellular microtubule arrays and the release of microtubules from the centrosome following nucleation. In Danio rerio (Zebrafish), this protein is Katanin p60 ATPase-containing subunit A1 (katna1).